The primary structure comprises 500 residues: Probable malate:quinone oxidoreductase (500 aa).

It belongs to the MQO family. It depends on FAD as a cofactor.

It carries out the reaction (S)-malate + a quinone = a quinol + oxaloacetate. The protein operates within carbohydrate metabolism; tricarboxylic acid cycle; oxaloacetate from (S)-malate (quinone route): step 1/1. The polypeptide is Probable malate:quinone oxidoreductase (Corynebacterium glutamicum (strain R)).